Reading from the N-terminus, the 379-residue chain is Protein PatA (379 aa).

The tract at residues 181-226 (RREASSQEISSSTEHNQIPVNNRRSTKFTSPPHTQPKPEPRLPQIN) is disordered. Positions 186-212 (SQEISSSTEHNQIPVNNRRSTKFTSPP) are enriched in polar residues. In terms of domain architecture, Response regulatory spans 262 to 378 (TIFCIDENPI…DLLKVIFKHI (117 aa)). 4-aspartylphosphate is present on Asp313.

It is found in the cell septum. Functionally, controls heterocyst pattern formation. Required for the differentiation of intercalary heterocysts but not for terminal heterocysts. This Nostoc sp. (strain PCC 7120 / SAG 25.82 / UTEX 2576) protein is Protein PatA (patA).